The primary structure comprises 808 residues: Quinoprotein glucose dehydrogenase (808 aa).

Residues 1–33 form the signal peptide; that stretch reads MSTTSRPGLWALITAAVFALCGAILTVGGAWVA. Transmembrane regions (helical) follow at residues 35-54, 59-76, 94-108, and 123-138; these read IGGP…TAFL, NPAA…TVIW, IVII…PFVS, and GAVG…SLFT. Residue Asp-470 is the Proton acceptor of the active site. The segment at 514 to 545 is disordered; sequence VPAPETPVPQGAAPGDHTSPTQPMSQLTLRPK. The segment covering 531–541 has biased composition (polar residues); that stretch reads TSPTQPMSQLT.

Belongs to the bacterial PQQ dehydrogenase family. Pyrroloquinoline quinone serves as cofactor.

It localises to the cell inner membrane. The catalysed reaction is a ubiquinone + D-glucose = D-glucono-1,5-lactone + a ubiquinol. The sequence is that of Quinoprotein glucose dehydrogenase (gdh) from Gluconobacter oxydans (strain 621H) (Gluconobacter suboxydans).